Consider the following 60-residue polypeptide: Small ribosomal subunit protein eS17 (60 aa).

Belongs to the eukaryotic ribosomal protein eS17 family.

In Methanosphaera stadtmanae (strain ATCC 43021 / DSM 3091 / JCM 11832 / MCB-3), this protein is Small ribosomal subunit protein eS17.